A 163-amino-acid chain; its full sequence is Calmodulin (163 aa).

Ala-2 bears the N-acetylalanine mark. EF-hand domains follow at residues 11-46 (EQIA…LGQN), 47-82 (PTEA…KMKE), 84-119 (DHED…LGEK), and 120-155 (LSEE…GATD). Residues Asp-24, Asp-26, Asp-28, Thr-30, Glu-35, Asp-60, Asp-62, Asn-64, Thr-66, Glu-71, Asp-97, Asp-99, Asn-101, Glu-108, Asp-133, Asp-135, Asp-137, Gln-139, and Glu-144 each coordinate Ca(2+).

This sequence belongs to the calmodulin family. In terms of assembly, associates with the spoke-associated complex containing CFAP61, CFAP91 and CFAP251; the association is calcium sensitive. Post-translationally, trimethylation of Lys-119 observed in other calmodulins is absent here.

The protein resides in the cytoplasm. It localises to the cytoskeleton. It is found in the flagellum axoneme. In terms of biological role, calmodulin mediates the control of a large number of enzymes, ion channels and other proteins by Ca(2+). Among the enzymes to be stimulated by the calmodulin-Ca(2+) complex are a number of protein kinases and phosphatases. The protein is Calmodulin of Chlamydomonas reinhardtii (Chlamydomonas smithii).